A 73-amino-acid polypeptide reads, in one-letter code: RNA-binding protein Hfq (73 aa).

The 61-residue stretch at 8 to 68 folds into the Sm domain; that stretch reads DQFLNQIRKE…ISTFAPQKNV (61 aa).

Belongs to the Hfq family. As to quaternary structure, homohexamer.

Its function is as follows. RNA chaperone that binds small regulatory RNA (sRNAs) and mRNAs to facilitate mRNA translational regulation in response to envelope stress, environmental stress and changes in metabolite concentrations. Also binds with high specificity to tRNAs. This is RNA-binding protein Hfq from Bacillus licheniformis (strain ATCC 14580 / DSM 13 / JCM 2505 / CCUG 7422 / NBRC 12200 / NCIMB 9375 / NCTC 10341 / NRRL NRS-1264 / Gibson 46).